Reading from the N-terminus, the 304-residue chain is GMP synthase [glutamine-hydrolyzing] subunit B (304 aa).

The GMPS ATP-PPase domain maps to Val2–Arg183. An ATP-binding site is contributed by Ser28–Ser34.

As to quaternary structure, heterodimer composed of a glutamine amidotransferase subunit (A) and a GMP-binding subunit (B).

It carries out the reaction XMP + L-glutamine + ATP + H2O = GMP + L-glutamate + AMP + diphosphate + 2 H(+). The protein operates within purine metabolism; GMP biosynthesis; GMP from XMP (L-Gln route): step 1/1. Catalyzes the synthesis of GMP from XMP. This Methanococcoides burtonii (strain DSM 6242 / NBRC 107633 / OCM 468 / ACE-M) protein is GMP synthase [glutamine-hydrolyzing] subunit B.